We begin with the raw amino-acid sequence, 791 residues long: Genome polyprotein (791 aa).

The tract at residues 1 to 15 (MNNQRKKTGRPSFNM) is interaction with host EXOC1. At 1-101 (MNNQRKKTGR…LNIMNRRKRS (101 aa)) the chain is on the cytoplasmic side. The hydrophobic; homodimerization of capsid protein C stretch occupies residues 37-72 (LLSGQGPMKLVMAFIAFLRFLAIPPTAGILARWSSF). Positions 101–114 (SVTMLLMLLPTALA) are cleaved as a propeptide — ER anchor for the capsid protein C, removed in mature form by serine protease NS3. A helical transmembrane segment spans residues 102–119 (VTMLLMLLPTALAFHLTT). Residues 120-242 (RGGEPTLIVS…QIQKVETWAL (123 aa)) are Extracellular-facing. An N-linked (GlcNAc...) asparagine; by host glycan is attached at Asn183. The helical transmembrane segment at 243 to 260 (RHPGFTVIGLFLAHAIGT) threads the bilayer. A topological domain (cytoplasmic) is located at residue Ser261. A helical membrane pass occupies residues 262-280 (ITQKGIIFILLMLVTPSMA). Over 281–725 (MRCVGIGNRD…IHQIFGTAYG (445 aa)) the chain is Extracellular. Intrachain disulfides connect Cys283–Cys310, Cys340–Cys401, Cys354–Cys385, and Cys372–Cys396. An N-linked (GlcNAc...) asparagine; by host glycan is attached at Asn347. Positions 378–391 (DRGWGNGCGLFGKG) are fusion peptide. Asn433 carries N-linked (GlcNAc...) asparagine; by host glycosylation. Disulfide bonds link Cys465-Cys565 and Cys582-Cys613. A helical transmembrane segment spans residues 726–746 (ILFSGVSWTMKIGIGILLTWL). Over 747-752 (GLNSRS) the chain is Cytoplasmic. A helical membrane pass occupies residues 753-775 (TSLSMTCIAVGMVTLYLGVMVQA). The Extracellular segment spans residues 776–791 (DSGCVINWKGKELKCG). A disulfide bond links Cys779 and Cys790.

Homodimer. Interacts (via N-terminus) with host EXOC1 (via C-terminus); this interaction results in EXOC1 degradation through the proteasome degradation pathway. As to quaternary structure, forms heterodimers with envelope protein E in the endoplasmic reticulum and Golgi. In terms of assembly, homodimer; in the endoplasmic reticulum and Golgi. Interacts with protein prM. Interacts with non-structural protein 1. Homodimer; Homohexamer when secreted. Interacts with envelope protein E. Post-translationally, specific enzymatic cleavages in vivo yield mature proteins. Cleavages in the lumen of endoplasmic reticulum are performed by host signal peptidase, wereas cleavages in the cytoplasmic side are performed by serine protease NS3. Signal cleavage at the 2K-4B site requires a prior NS3 protease-mediated cleavage at the 4A-2K site. N-glycosylated. In terms of processing, N-glycosylated. The excreted form is glycosylated and this is required for efficient secretion of the protein from infected cells.

Its subcellular location is the virion. The protein resides in the host nucleus. The protein localises to the host cytoplasm. It is found in the host perinuclear region. It localises to the secreted. Its subcellular location is the virion membrane. The protein resides in the host endoplasmic reticulum membrane. Plays a role in virus budding by binding to the cell membrane and gathering the viral RNA into a nucleocapsid that forms the core of a mature virus particle. During virus entry, may induce genome penetration into the host cytoplasm after hemifusion induced by the surface proteins. Can migrate to the cell nucleus where it modulates host functions. Overcomes the anti-viral effects of host EXOC1 by sequestering and degrading the latter through the proteasome degradation pathway. Functionally, inhibits RNA silencing by interfering with host Dicer. Its function is as follows. Prevents premature fusion activity of envelope proteins in trans-Golgi by binding to envelope protein E at pH6.0. After virion release in extracellular space, gets dissociated from E dimers. In terms of biological role, acts as a chaperone for envelope protein E during intracellular virion assembly by masking and inactivating envelope protein E fusion peptide. prM is the only viral peptide matured by host furin in the trans-Golgi network probably to avoid catastrophic activation of the viral fusion activity in acidic GolGi compartment prior to virion release. prM-E cleavage is inefficient, and many virions are only partially matured. These uncleaved prM would play a role in immune evasion. May play a role in virus budding. Exerts cytotoxic effects by activating a mitochondrial apoptotic pathway through M ectodomain. May display a viroporin activity. Functionally, binds to host cell surface receptor and mediates fusion between viral and cellular membranes. Envelope protein is synthesized in the endoplasmic reticulum in the form of heterodimer with protein prM. They play a role in virion budding in the ER, and the newly formed immature particle is covered with 60 spikes composed of heterodimer between precursor prM and envelope protein E. The virion is transported to the Golgi apparatus where the low pH causes dissociation of PrM-E heterodimers and formation of E homodimers. prM-E cleavage is inefficient, and many virions are only partially matured. These uncleaved prM would play a role in immune evasion. Its function is as follows. Involved in immune evasion, pathogenesis and viral replication. Once cleaved off the polyprotein, is targeted to three destinations: the viral replication cycle, the plasma membrane and the extracellular compartment. Essential for viral replication. Required for formation of the replication complex and recruitment of other non-structural proteins to the ER-derived membrane structures. Excreted as a hexameric lipoparticle that plays a role against host immune response. Antagonizing the complement function. Binds to the host macrophages and dendritic cells. Inhibits signal transduction originating from Toll-like receptor 3 (TLR3). In terms of biological role, disrupts the host endothelial glycocalyx layer of host pulmonary microvascular endothelial cells, inducing degradation of sialic acid and shedding of heparan sulfate proteoglycans. NS1 induces expression of sialidases, heparanase, and activates cathepsin L, which activates heparanase via enzymatic cleavage. These effects are probably linked to the endothelial hyperpermeability observed in severe dengue disease. The sequence is that of Genome polyprotein from Dengue virus type 1 (strain Jamaica/CV1636/1977) (DENV-1).